The following is an 81-amino-acid chain: Putative membrane protein insertion efficiency factor (81 aa).

The protein belongs to the UPF0161 family.

It localises to the cell membrane. Could be involved in insertion of integral membrane proteins into the membrane. The sequence is that of Putative membrane protein insertion efficiency factor from Geobacillus kaustophilus (strain HTA426).